The chain runs to 2004 residues: Histone acetyltransferase KAT6A (2004 aa).

The SAMD1-like winged helix (WH) domain maps to 1-77; it reads MVKLANPLYT…LNSYKDPDNP (77 aa). Residues 1-144 are required for activation of RUNX1-1; the sequence is MVKLANPLYT…FGGSAASGFH (144 aa). A required for nuclear localization region spans residues 52-166; the sequence is ELSVKDGTIL…HGRLLKDGPL (115 aa). The 77-residue stretch at 95–171 folds into the H15 domain; the sequence is QNVDWNKLIK…KDGPLYRLNT (77 aa). The segment at 144–664 is interaction with PML; sequence HQQLRLAIKR…RKGYGRFLID (521 aa). An N6-acetyllysine modification is found at Lys172. PHD-type zinc fingers lie at residues 206-265 and 259-313; these read IPIC…CKTC and CIEC…CRPR. The interval 312–664 is interaction with RUNX1-1; the sequence is PRKKGRKLLQ…RKGYGRFLID (353 aa). Positions 334-375 are disordered; the sequence is PIGRPKNRLKKQNTVSKGPFSKVRTGPGRGRKRKITLSSQSA. Lys350 and Lys355 each carry N6-acetyllysine. Thr369 is subject to Phosphothreonine; by PKB/AKT1. Ser420 is subject to Phosphoserine. The segment at 441–464 is disordered; the sequence is KRGNRKSSTSDWPTDNQDGWDGKQ. The segment covering 446–457 has biased composition (polar residues); the sequence is KSSTSDWPTDNQ. The residue at position 473 (Ser473) is a Phosphoserine. The segment at 488-778 is catalytic; sequence IQEQALQKVG…VDPECLRWTP (291 aa). One can recognise an MYST-type HAT domain in the interval 504 to 778; it reads PQVRCPSVIE…VDPECLRWTP (275 aa). The interval 507-810 is mediates interaction with BRPF1, required for histone H3 acetyltransferase activity; it reads RCPSVIEFGK…EPQCQERELE (304 aa). Residues 537–562 form a C2HC MYST-type zinc finger; sequence LYLCEFCLKYMKSRTILQQHMKKCGW. An N6-acetyllysine; by autocatalysis modification is found at Lys604. Residues 645–649 and 654–660 contribute to the acetyl-CoA site; these read SCIMI and QRKGYGR. Glu680 functions as the Proton donor/acceptor in the catalytic mechanism. Ser684 is an acetyl-CoA binding site. 3 disordered regions span residues 785–1445, 1461–1621, and 1637–1721; these read VVSE…AYQD, QADE…MMQQ, and SCVV…MEIP. Residues Ser787 and Ser812 each carry the phosphoserine modification. Residues 787-803 are compositionally biased toward acidic residues; that stretch reads SEEEEEEAEEGENEEPQ. Lys815 carries the post-translational modification N6-acetyllysine. Residues 817–836 are compositionally biased toward basic and acidic residues; it reads VSHENKEQDSYSVESEKKPE. Lys834 participates in a covalent cross-link: Glycyl lysine isopeptide (Lys-Gly) (interchain with G-Cter in SUMO2). Basic residues predominate over residues 864-873; it reads RRGRWGRKNR. The span at 874 to 888 shows a compositional bias: basic and acidic residues; the sequence is KTQERFGDKDSKLLL. A Phosphotyrosine modification is found at Tyr899. 2 stretches are compositionally biased toward basic and acidic residues: residues 931–942 and 953–980; these read GKPDLPKRRLSE and KSPE…DRAV. Phosphoserine is present on residues Ser941, Ser954, and Ser974. At Lys1007 the chain carries N6-acetyllysine. A compositionally biased stretch (basic residues) spans 1009–1030; sequence TLKRKKPFLHRRRRVRKRKHHN. The segment covering 1031–1042 has biased composition (low complexity); sequence SSVVTETISETT. Acidic residues-rich tracts occupy residues 1043-1053 and 1065-1078; these read EVLDEPFEDSD and FEID…DENE. Phosphoserine occurs at positions 1089, 1090, and 1113. Acidic residues predominate over residues 1107–1118; sequence EEEDEESDDADD. Over residues 1146-1172 the composition is skewed to basic residues; it reads LKKKKGWPKGKSRKPIHWKKRPGRKPG. Basic and acidic residues predominate over residues 1203-1223; that stretch reads KIQESEETVEPKEDMPLPEER. The segment covering 1224 to 1245 has biased composition (acidic residues); that stretch reads KEEEEMQAEAEEAEEGEEEDAA. Low complexity predominate over residues 1246–1262; that stretch reads SSEVPAASPADSSNSPE. Basic and acidic residues predominate over residues 1275–1287; it reads EKPRVSEEQRQSE. Residues 1288-1305 show a composition bias toward acidic residues; the sequence is EEQQELEEPEPEEEEDAA. Basic and acidic residues-rich tracts occupy residues 1323–1345, 1358–1367, and 1398–1420; these read HLES…KEEP, KSREKIKDKE, and EDSH…HSEL. Residue Lys1342 forms a Glycyl lysine isopeptide (Lys-Gly) (interchain with G-Cter in SUMO2) linkage. The span at 1481 to 1503 shows a compositional bias: low complexity; it reads SPISSVQSHPSQSVRSVSSPNVP. The span at 1508 to 1529 shows a compositional bias: polar residues; that stretch reads GYTQISPEQGSLSAPSMQNMET. The tract at residues 1517–1642 is interaction with RUNX1-2; that stretch reads GSLSAPSMQN…KSPQSCVVER (126 aa). Residues 1517-1741 form an interaction with PML region; sequence GSLSAPSMQN…YERIPGDFGA (225 aa). A compositionally biased stretch (low complexity) spans 1534 to 1548; sequence DVPSVSDHSQQVVDS. Over residues 1556–1573 the composition is skewed to polar residues; that stretch reads IESTTENYENPSSYDSTM. Positions 1574-1621 are enriched in low complexity; the sequence is GGSICGNSSSQSSCSYGGLSSSSSLTQSSCVVTQQMASMGSSCSMMQQ. Residues 1650–1699 show a composition bias toward pro residues; that stretch reads QPPPPPPQQPQPPPPQPQPAPQPPPPQQQPQQQPQPQPQQPPPPPPPQQQ. Over residues 1702–1712 the composition is skewed to polar residues; it reads LSQCSMNNSFT. Residues 1913–1948 are required for activation of RUNX1-2; sequence SMNMNTLNAMNSYRMTQPMMNSSYHSNPAYMNQTAQ.

It belongs to the MYST (SAS/MOZ) family. In terms of assembly, component of the MOZ/MORF complex composed at least of ING5, KAT6A, KAT6B, MEAF6 and one of BRPF1, BRD1/BRPF2 and BRPF3. Interacts with RUNX1; phosphorylation of RUNX1 enhances the interaction. Interacts with RUNX2. Interacts with p53/TP53. Interacts with PML (isoform PML-4) and this interaction positively regulates its acetylation activity towards p53/TP53. In terms of processing, autoacetylation at Lys-604 is required for proper function. Autoacetylated. Phosphorylation at Thr-369 by PKB/AKT1 inhibits its interaction with PML and negatively regulates its acetylation activity towards p53/TP53.

It is found in the nucleus. The protein resides in the nucleolus. Its subcellular location is the nucleoplasm. The protein localises to the PML body. The enzyme catalyses L-lysyl-[protein] + acetyl-CoA = N(6)-acetyl-L-lysyl-[protein] + CoA + H(+). Its function is as follows. Histone acetyltransferase that acetylates lysine residues in histone H3 and histone H4 (in vitro). Component of the MOZ/MORF complex which has a histone H3 acetyltransferase activity. May act as a transcriptional coactivator for RUNX1 and RUNX2. Acetylates p53/TP53 at 'Lys-120' and 'Lys-382' and controls its transcriptional activity via association with PML. This chain is Histone acetyltransferase KAT6A (KAT6A), found in Homo sapiens (Human).